A 154-amino-acid polypeptide reads, in one-letter code: MQLLQVRTTNTLRRLPGTPLMPSAGAVRVVASVQSGHSWWRMWDGPTGAAEAGSCAEMLRTSAPGTSRPNLSFLLGQVIPLAHTGSVETLPSEESWGCRQRASPLPPSTAPMAVSASHRGGTGTRTWLVDPTLSRDTSPLGGQSWGSPQPSRGA.

The disordered stretch occupies residues 91 to 154 (PSEESWGCRQ…WGSPQPSRGA (64 aa)). Polar residues predominate over residues 134-154 (SRDTSPLGGQSWGSPQPSRGA).

This is an uncharacterized protein from Homo sapiens (Human).